The following is a 183-amino-acid chain: Ribosome rescue factor SmrB (183 aa).

Residues 98–173 enclose the Smr domain; the sequence is LDLHGLTQLQ…GDAALLVLIE (76 aa).

This sequence belongs to the SmrB family. As to quaternary structure, associates with collided ribosomes, but not with correctly translating polysomes.

Functionally, acts as a ribosome collision sensor. Detects stalled/collided disomes (pairs of ribosomes where the leading ribosome is stalled and a second ribosome has collided with it) and endonucleolytically cleaves mRNA at the 5' boundary of the stalled ribosome. Stalled/collided disomes form a new interface (primarily via the 30S subunits) that binds SmrB. Cleaved mRNA becomes available for tmRNA ligation, leading to ribosomal subunit dissociation and rescue of stalled ribosomes. This Escherichia coli O7:K1 (strain IAI39 / ExPEC) protein is Ribosome rescue factor SmrB.